Here is a 218-residue protein sequence, read N- to C-terminus: Ropporin-1-like protein (218 aa).

Residues 17–46 (PELTDILKQFTKAAIRTQPADVLQWSAGYF) enclose the RIIa domain.

This sequence belongs to the ropporin family. In terms of assembly, component of the axonemal radial spoke complex 1 (RS1), at least composed of spoke head proteins RSPH1, RSPH3, RSPH9 and the cilia-specific component RSPH4A or sperm-specific component RSPH6A, spoke stalk proteins RSPH14, DNAJB13, DYDC1, ROPN1L and NME5, and the anchor protein IQUB. May interact with AKAP3. Interacts with FSCB; the interaction increases upon spermatozoa capacitation conditions. Interacts with CFAP61. Post-translationally, sumoylated, sumoylation decreases upon spermatozoa capacitation conditions.

It localises to the cell projection. The protein resides in the cilium. It is found in the flagellum. Functionally, functions as part of axonemal radial spoke complexes that play an important part in the motility of sperm and cilia. Important for male fertility. With ROPN1, involved in fibrous sheath integrity and sperm motility, plays a role in PKA-dependent signaling processes required for spermatozoa capacitation. This is Ropporin-1-like protein (ROPN1L) from Bos taurus (Bovine).